Here is a 153-residue protein sequence, read N- to C-terminus: Histone H2A.Z-specific chaperone CHZ1 (153 aa).

Residues 1 to 29 (MSDEAKEKRELESQKESSHNKSEKSVEPK) are compositionally biased toward basic and acidic residues. Residues 1-153 (MSDEAKEKRE…EDEEDDDFKE (153 aa)) are disordered. At Ser-2 the chain carries N-acetylserine. Over residues 56–65 (LTKSENNGTV) the composition is skewed to polar residues. Residues Ser-68 and Ser-70 each carry the phosphoserine modification. A compositionally biased stretch (acidic residues) spans 84–94 (EGEEEEDDLAE). Residues 87–108 (EEEDDLAEIDTSNIITSGRRTR) are important for H2A.Z-H2B binding. Positions 110 to 138 (KVIDYKKTAEELDKKEPSTGSKDDVGYGE) are enriched in basic and acidic residues. Over residues 139–153 (KEEDDEDEEDDDFKE) the composition is skewed to acidic residues.

It belongs to the CHZ1 family. Forms a heterotrimer with H2A.Z-H2B, stabilizing the association of the histone dimer. Also, with a lower affinity, forms a heterotrimer with H2A-H2B.

It is found in the nucleus. Functionally, forms a chaperone-bound H2A.Z-H2B complex that acts as a source for SWR1 complex-dependent H2A to H2A.Z histone replacement in chromatin. This is Histone H2A.Z-specific chaperone CHZ1 (CHZ1) from Saccharomyces cerevisiae (strain ATCC 204508 / S288c) (Baker's yeast).